We begin with the raw amino-acid sequence, 240 residues long: Uridylate kinase (240 aa).

An ATP-binding site is contributed by 12-15 (KLSG). Residues 20-25 (GDKGFG) form an involved in allosteric activation by GTP region. Gly-54 contacts UMP. ATP-binding residues include Gly-55 and Arg-59. Residues Asp-74 and 135–142 (TGSPYFST) each bind UMP. Residues Asn-163, Tyr-169, and Asp-172 each coordinate ATP.

This sequence belongs to the UMP kinase family. In terms of assembly, homohexamer.

Its subcellular location is the cytoplasm. The catalysed reaction is UMP + ATP = UDP + ADP. The protein operates within pyrimidine metabolism; CTP biosynthesis via de novo pathway; UDP from UMP (UMPK route): step 1/1. Allosterically activated by GTP. Inhibited by UTP. Functionally, catalyzes the reversible phosphorylation of UMP to UDP. The protein is Uridylate kinase of Levilactobacillus brevis (strain ATCC 367 / BCRC 12310 / CIP 105137 / JCM 1170 / LMG 11437 / NCIMB 947 / NCTC 947) (Lactobacillus brevis).